The sequence spans 508 residues: 2,3-bisphosphoglycerate-independent phosphoglycerate mutase (508 aa).

The Mn(2+) site is built by Asp9 and Ser59. Residue Ser59 is the Phosphoserine intermediate of the active site. Residues His120, 149–150 (RD), Arg181, Arg187, 254–257 (RADR), and Lys331 contribute to the substrate site. Residues Asp398, His402, Asp439, His440, and His456 each coordinate Mn(2+).

Belongs to the BPG-independent phosphoglycerate mutase family. It depends on Mn(2+) as a cofactor.

The enzyme catalyses (2R)-2-phosphoglycerate = (2R)-3-phosphoglycerate. It functions in the pathway carbohydrate degradation; glycolysis; pyruvate from D-glyceraldehyde 3-phosphate: step 3/5. Its function is as follows. Catalyzes the interconversion of 2-phosphoglycerate and 3-phosphoglycerate. The polypeptide is 2,3-bisphosphoglycerate-independent phosphoglycerate mutase (Halobacterium salinarum (strain ATCC 700922 / JCM 11081 / NRC-1) (Halobacterium halobium)).